The chain runs to 528 residues: MAHQHFFKPLLPGFHASLTIPVAFFLKYIEGRYEQKTAKLRSDASKRTWEVKIDGQRLTDGWKEFAVSHDLRIGDIVVFRQESDLAFHVTLLGPSCCGIQYGSCSVEKNNLGDEKKKVKENPNGEAESSSRDPSCFVANVAPSSLRYDLMRFPRGFVRDNGVVGSGEIVLMNEKGRSWNFNLRQKPSNGTVYVRGGWVSFCDANGLKAGDNYTFKLIKRAGTLVLRLLPNEPKEEANEVSLPEEPESDAERNLEKIQRKEKVKKNVTREAESSSQDPSCFVANVSPSSLRYDTLYLPKRFMRENGVDKRCGEMILINEKGKSWTLDLKVKKSSGTSLIKRGWRSFCSANGLRAGSIITLKLIKKRATLVLRLIPNEPEEANEVVSLSTEQESDEESIHDEKISRRKSLLSENRFVTLTLTPYTIQSSLLNENLLCESMFQRLPVPFTRMNGINEETKMTLLDKHGVKWLTTLRFEDDKRKRLRMVGGWQGFIQANDVKANESIMLELIWEEETSCVLKFCSKVKLEIK.

DNA-binding regions (TF-B3) lie at residues 3-95 (HQHF…LGPS) and 135-231 (CFVA…LPNE). A disordered region spans residues 234 to 253 (EEANEVSLPEEPESDAERNL). DNA-binding regions (TF-B3) lie at residues 279–376 (CFVA…IPNE) and 425–522 (QSSL…FCSK).

Its subcellular location is the nucleus. This is Putative B3 domain-containing protein REM15 (REM15.15) from Arabidopsis thaliana (Mouse-ear cress).